We begin with the raw amino-acid sequence, 525 residues long: Protein shisa-6 (525 aa).

The N-terminal stretch at 1–30 (MALRRLLLPPLLLSLLLSLASLHLPPGADA) is a signal peptide. The Extracellular portion of the chain corresponds to 31-180 (ARGRSGNRTL…NKYDPEKDKT (150 aa)). Residues asparagine 37 and asparagine 62 are each glycosylated (N-linked (GlcNAc...) asparagine). The chain crosses the membrane as a helical span at residues 181 to 201 (NFTVYITCGVIAFVIVAGVFA). Topologically, residues 202-525 (KVSYDKAHRP…YTASKTEVTV (324 aa)) are cytoplasmic. Residues 241–294 (ISAIDTSPKENTPVRSTSKNHYTPVRTAKQTPGDRQYNHPILSSATQTPTHEKP) form a disordered region. The span at 243–261 (AIDTSPKENTPVRSTSKNH) shows a compositional bias: polar residues. 3 positions are modified to phosphoserine: serine 416, serine 422, and serine 434. Threonine 458 carries the phosphothreonine modification. The tract at residues 469–495 (MHSHPSASNNSYATLGQSQTAAKRHAF) is disordered. Positions 473–489 (PSASNNSYATLGQSQTA) are enriched in polar residues. Phosphothreonine is present on threonine 502. Residues 522 to 525 (EVTV) carry the PDZ-binding motif.

The protein belongs to the shisa family. Component of the postsynaptic hippocampal AMPA-type glutamate receptor (AMPAR) complex, at least composed of pore forming AMPAR subunits GRIA1, GRIA2 and GRIA3 and AMPAR auxiliary proteins SHISA6 and SHISA7. Interacts (via PDZ-binding motif) with DLG4/PSD-95 (via PDZ domain); the interaction is direct. N-glycosylated. In terms of tissue distribution, highly expressed in cerebellum and hippocampal neurons: CA1 stratum oriens and stratum radiatum, CA3 stratum oriens and stratum lucidum, and the dentate gyrus polymorphic layer. Expressed in other brain structures including olfactory bulb, cortex, amygdala and midbrain (at protein level). Also expressed in a subset of spermatogonial stem cells. Also expressed in eye, heart, kidney, lung, muscle and spleen. Isoform 2: Specifically expressed in hippocampus.

It is found in the postsynaptic density membrane. Functionally, involved in maintenance of high-frequency synaptic transmission at hippocampal CA3-CA1 synapses. Regulates AMPA-type glutamate receptor (AMPAR) immobilization at postsynaptic density keeping the channels in an activated state in the presence of glutamate and preventing synaptic depression. May play a role in self-renewal and differentiation of spermatogonial stem cells by inhibiting canonical Wnt signaling pathway. The sequence is that of Protein shisa-6 from Mus musculus (Mouse).